We begin with the raw amino-acid sequence, 431 residues long: Tryptophan synthase beta chain (431 aa).

Lys109 is modified (N6-(pyridoxal phosphate)lysine).

This sequence belongs to the TrpB family. In terms of assembly, tetramer of two alpha and two beta chains. Pyridoxal 5'-phosphate serves as cofactor.

The enzyme catalyses (1S,2R)-1-C-(indol-3-yl)glycerol 3-phosphate + L-serine = D-glyceraldehyde 3-phosphate + L-tryptophan + H2O. Its pathway is amino-acid biosynthesis; L-tryptophan biosynthesis; L-tryptophan from chorismate: step 5/5. The beta subunit is responsible for the synthesis of L-tryptophan from indole and L-serine. This is Tryptophan synthase beta chain from Deinococcus radiodurans (strain ATCC 13939 / DSM 20539 / JCM 16871 / CCUG 27074 / LMG 4051 / NBRC 15346 / NCIMB 9279 / VKM B-1422 / R1).